The primary structure comprises 49 residues: Disintegrin eristostatin (49 aa).

One can recognise a Disintegrin domain in the interval 1-49 (QEEPCATGPCCRRCKFKRAGKVCRVARGDWNDDYCTGKSCDCPKNPWNG). Cystine bridges form between cysteine 5–cysteine 14, cysteine 10–cysteine 35, cysteine 11–cysteine 40, and cysteine 23–cysteine 42. A Cell attachment site motif is present at residues 27 to 29 (RGD).

This sequence belongs to the venom metalloproteinase (M12B) family. P-II subfamily. P-IIa sub-subfamily. Monomer. Expressed by the venom gland.

It localises to the secreted. In terms of biological role, is a potent inhibitor of ADP-induced platelet aggregation. Acts by binding to alpha-IIb/beta-3 (ITGA2B/ITGB3) receptor on the platelet surface. Binds with the same high affinity to resting and activated platelets. Also binds the alpha-4/beta-1 (ITGA4/ITGB1) integrin. Is a potent inhibitor of human and murine melanoma metastases in mouse model systems, also due to the inhibition of binding between the alpha-4/beta-1 integrin and the vascular cell adhesion protein VCAM1. Reacts neither with the integrin alpha-V/beta-3 (ITGAV/ITGB3) vitronectin receptor nor with the integrin alpha-5/beta-1 (ITGA5/ITGB1) fibronectin receptor. Has no effect on cell proliferation or angiogenesis. Specifically inhibits cell migration on fibronectin, but not that on collagen IV or laminin. May involve fibronectin-binding integrins that mediate cell migration. The chain is Disintegrin eristostatin from Eristicophis macmahoni (Leaf-nosed viper).